Reading from the N-terminus, the 543-residue chain is MIAGQPIFILKEGTKRESGKDAMKENIEAAIAISNSVRSSLGPRGMDKMLVDSLGDIVITNDGVTILKEMDVEHPAAKMMVEVSKTQDSFVGDGTTTAVIIAGGLLQQAQGLINQNVHPTVISEGYRMASEEAKRVIDEISTKIGADEKALLLKMAQTSLNSKSASVAKDKLAEISYEAVKSVAELRDGKYYVDFDNIQVVKKQGGAIDDTQLINGIIVDKEKVHPGMPDVVKDAKIALLDAPLEIKKPEFDTNLRIEDPSMIQKFLAQEENMLREMVDKIKSVGANVVITQKGIDDMAQHYLSRAGIYAVRRVKKSDMDKLAKATGASIVSTIDEISSSDLGTAERVEQVKVGEDYMTFVTGCKNPKAVSILVRGETEHVVDEMERSITDSLHVVASALEDGAYAAGGGATAAEIAFRLRSYAQKIGGRQQLAIEKFADAIEEIPRALAENAGLDPIDILLKLRAEHAKGNKTYGINVFTGEIEDMVKNGVIEPIRVGKQAIESATEAAIMILRIDDVIATKSSSSSSNPPKSGSSSESSED.

A disordered region spans residues 522 to 543 (TKSSSSSSNPPKSGSSSESSED). The segment covering 523 to 543 (KSSSSSSNPPKSGSSSESSED) has biased composition (low complexity).

This sequence belongs to the TCP-1 chaperonin family. Forms a Heterooligomeric complex of two stacked eight-membered rings. Post-translationally, the N-terminus is blocked.

Its function is as follows. Molecular chaperone; binds unfolded polypeptides in vitro, and has a weak ATPase activity. The sequence is that of Thermosome subunit beta (thsB) from Thermoplasma acidophilum (strain ATCC 25905 / DSM 1728 / JCM 9062 / NBRC 15155 / AMRC-C165).